Here is a 334-residue protein sequence, read N- to C-terminus: B1 bradykinin receptor (334 aa).

A disordered region spans residues 1 to 21; it reads MASQASLKLQPSNQSQQAPPN. The Extracellular portion of the chain corresponds to 1 to 41; sequence MASQASLKLQPSNQSQQAPPNITSCEGAPEAWDLLCRVLPG. Positions 10–21 are enriched in low complexity; it reads QPSNQSQQAPPN. 2 N-linked (GlcNAc...) asparagine glycosylation sites follow: asparagine 13 and asparagine 21. The chain crosses the membrane as a helical span at residues 42-62; it reads FVITVCFFGLLGNLLVLSFFL. Residues 63–80 are Cytoplasmic-facing; sequence LPWRRWWQQRRQRLTIAE. A helical membrane pass occupies residues 81–101; that stretch reads IYLANLAASDLVFVLGLPFWA. The Extracellular portion of the chain corresponds to 102-118; it reads ENVGNRFNWPFGSDLCR. Cysteine 117 and cysteine 196 are disulfide-bonded. A helical transmembrane segment spans residues 119 to 139; that stretch reads VVSGVIKANLFISIFLVVAIS. Topologically, residues 140–161 are cytoplasmic; sequence QDRYRLLVYPMTSWGNRRRRQA. A helical transmembrane segment spans residues 162 to 182; the sequence is QVTCLLIWVAGGLLSTPTFLL. At 183–214 the chain is on the extracellular side; it reads RSVKVVPDLNISACILLFPHEAWHFVRMVELN. Asparagine 192 carries N-linked (GlcNAc...) asparagine glycosylation. A helical membrane pass occupies residues 215–235; it reads VLGFLLPLAAILYFNFHILAS. The Cytoplasmic portion of the chain corresponds to 236 to 258; that stretch reads LRGQKEASRTRCGGPKDSKTMGL. The chain crosses the membrane as a helical span at residues 259–279; the sequence is ILTLVASFLVCWAPYHFFAFL. The Extracellular portion of the chain corresponds to 280–302; it reads DFLVQVRVIQDCFWKELTDLGLQ. A helical membrane pass occupies residues 303–323; sequence LANFFAFVNSCLNPLIYVFAG. Over 324 to 334 the chain is Cytoplasmic; the sequence is RLFKTRVLGTL.

This sequence belongs to the G-protein coupled receptor 1 family. Bradykinin receptor subfamily. BDKRB1 sub-subfamily. In terms of tissue distribution, expressed in heart, liver and lung.

Its subcellular location is the cell membrane. In terms of biological role, this is a receptor for bradykinin. Could be a factor in chronic pain and inflammation. The sequence is that of B1 bradykinin receptor (Bdkrb1) from Mus musculus (Mouse).